The chain runs to 91 residues: Small ribosomal subunit protein uS19 (91 aa).

It belongs to the universal ribosomal protein uS19 family.

Its function is as follows. Protein S19 forms a complex with S13 that binds strongly to the 16S ribosomal RNA. In Colwellia psychrerythraea (strain 34H / ATCC BAA-681) (Vibrio psychroerythus), this protein is Small ribosomal subunit protein uS19.